A 198-amino-acid chain; its full sequence is Thymidine kinase (198 aa).

ATP is bound by residues 16 to 23 (GGMYSGKS) and 89 to 92 (EEGQ). Catalysis depends on glutamate 90, which acts as the Proton acceptor. Residues cysteine 146, cysteine 149, cysteine 184, and cysteine 187 each contribute to the Zn(2+) site.

This sequence belongs to the thymidine kinase family. In terms of assembly, homotetramer.

It is found in the cytoplasm. The catalysed reaction is thymidine + ATP = dTMP + ADP + H(+). This chain is Thymidine kinase, found in Dictyoglomus thermophilum (strain ATCC 35947 / DSM 3960 / H-6-12).